We begin with the raw amino-acid sequence, 172 residues long: Small ribosomal subunit protein bS6 (172 aa).

Residues 100 to 172 (LPAKRVVKTS…ENKEIEKKED (73 aa)) form a disordered region. The segment covering 107-172 (KTSEKNVKED…ENKEIEKKED (66 aa)) has biased composition (basic and acidic residues).

This sequence belongs to the bacterial ribosomal protein bS6 family.

In terms of biological role, binds together with bS18 to 16S ribosomal RNA. The protein is Small ribosomal subunit protein bS6 of Prochlorococcus marinus (strain MIT 9211).